Consider the following 336-residue polypeptide: Dihydroorotate dehydrogenase (quinone) (336 aa).

Residues 62–66 (AGLDK) and Thr-86 each bind FMN. Lys-66 is a binding site for substrate. 111–115 (NRMGF) serves as a coordination point for substrate. 2 residues coordinate FMN: Asn-139 and Asn-172. Asn-172 is a binding site for substrate. Ser-175 acts as the Nucleophile in catalysis. Asn-177 contributes to the substrate binding site. FMN contacts are provided by Lys-217 and Thr-245. Position 246-247 (246-247 (NT)) interacts with substrate. FMN-binding positions include Gly-268, Gly-297, and 318–319 (YS).

Belongs to the dihydroorotate dehydrogenase family. Type 2 subfamily. In terms of assembly, monomer. FMN is required as a cofactor.

Its subcellular location is the cell membrane. It catalyses the reaction (S)-dihydroorotate + a quinone = orotate + a quinol. The protein operates within pyrimidine metabolism; UMP biosynthesis via de novo pathway; orotate from (S)-dihydroorotate (quinone route): step 1/1. Its function is as follows. Catalyzes the conversion of dihydroorotate to orotate with quinone as electron acceptor. The polypeptide is Dihydroorotate dehydrogenase (quinone) (Pectobacterium carotovorum subsp. carotovorum (strain PC1)).